We begin with the raw amino-acid sequence, 877 residues long: GPI ethanolamine phosphate transferase 2 (877 aa).

Asparagine 190 and asparagine 368 each carry an N-linked (GlcNAc...) asparagine glycan. 5 helical membrane passes run 409–429 (VDIY…FGLF), 443–463 (YNWY…ASSL), 464–484 (IEEE…ALYF), 528–548 (VDLL…LIYS), and 570–590 (DFGS…SFSF). N-linked (GlcNAc...) asparagine glycosylation is present at asparagine 611. Helical transmembrane passes span 634–654 (IHLS…RIVL), 683–703 (EIVP…KLLA), 716–736 (LMII…FSMG), 758–778 (VFLV…FWSL), 817–837 (LAGF…CFNL), and 854–876 (FASW…ILAL).

This sequence belongs to the PIGG/PIGN/PIGO family. PIGG subfamily.

The protein resides in the endoplasmic reticulum membrane. It participates in glycolipid biosynthesis; glycosylphosphatidylinositol-anchor biosynthesis. In terms of biological role, ethanolamine phosphate transferase involved in glycosylphosphatidylinositol-anchor biosynthesis. Transfers ethanolamine phosphate to the GPI second mannose. This chain is GPI ethanolamine phosphate transferase 2 (LAS21), found in Debaryomyces hansenii (strain ATCC 36239 / CBS 767 / BCRC 21394 / JCM 1990 / NBRC 0083 / IGC 2968) (Yeast).